The chain runs to 255 residues: tRNA pseudouridine synthase A (255 aa).

Asp-43 serves as the catalytic Nucleophile. Position 94 (Tyr-94) interacts with substrate.

The protein belongs to the tRNA pseudouridine synthase TruA family.

The catalysed reaction is uridine(38/39/40) in tRNA = pseudouridine(38/39/40) in tRNA. Functionally, formation of pseudouridine at positions 38, 39 and 40 in the anticodon stem and loop of transfer RNAs. In Pyrobaculum neutrophilum (strain DSM 2338 / JCM 9278 / NBRC 100436 / V24Sta) (Thermoproteus neutrophilus), this protein is tRNA pseudouridine synthase A.